Consider the following 172-residue polypeptide: Stellate protein CG33247 (172 aa).

The protein belongs to the casein kinase 2 subunit beta family. Interacts in vitro with the casein kinase 2 alpha subunit (CkII-alpha). The relevance of such interaction is however unclear in vivo. Probably not expressed in wild-type flies. In males lacking the Y chromosome, it is testis-specific and constitutes the main component of star-shaped crystals.

Its function is as follows. Unknown. In males lacking the Y chromosome, its strong overexpression leads to the appearance of proteinaceous star-shaped crystals in the primary spermatocytes causing meiotic drive, possibly by interfering with normal casein kinase 2 activity. In Drosophila melanogaster (Fruit fly), this protein is Stellate protein CG33247 (Ste:CG33247).